Reading from the N-terminus, the 375-residue chain is Alanine racemase, catabolic (375 aa).

The active-site Proton acceptor; specific for D-alanine is the K38. K38 is subject to N6-(pyridoxal phosphate)lysine. Y269 acts as the Proton acceptor; specific for L-alanine in catalysis.

It belongs to the alanine racemase family. Requires pyridoxal 5'-phosphate as cofactor.

The catalysed reaction is L-alanine = D-alanine. It functions in the pathway amino-acid biosynthesis; D-alanine biosynthesis; D-alanine from L-alanine: step 1/1. The chain is Alanine racemase, catabolic (alr1) from Schizosaccharomyces pombe (strain 972 / ATCC 24843) (Fission yeast).